The sequence spans 557 residues: Putative inactive polypeptide N-acetylgalactosaminyltransferase 11 (557 aa).

The Cytoplasmic segment spans residues 1 to 4 (MKSL). The helical; Signal-anchor for type II membrane protein transmembrane segment at 5 to 27 (LFGTPCSCAIFILVYCIITLFIW) threads the bilayer. The Lumenal segment spans residues 28-557 (FLYTDNLSNA…MRDICLSVNH (530 aa)). N-linked (GlcNAc...) asparagine glycosylation is found at Asn-33 and Asn-103. 5 cysteine pairs are disulfide-bonded: Cys-99–Cys-325, Cys-316–Cys-397, Cys-437–Cys-450, Cys-472–Cys-486, and Cys-511–Cys-526. The catalytic subdomain A stretch occupies residues 109–215 (TVTVSIVIAI…RGWLPPLLEP (107 aa)). A glycan (N-linked (GlcNAc...) asparagine) is linked at Asn-220. The tract at residues 271–333 (PYPSSQLEGR…PCSRVGIIYK (63 aa)) is catalytic subdomain B. Residue Asn-379 is glycosylated (N-linked (GlcNAc...) asparagine). The region spanning 456-557 (EDWTLTSRCQ…MRDICLSVNH (102 aa)) is the Ricin B-type lectin domain.

This sequence belongs to the glycosyltransferase 2 family. GalNAc-T subfamily.

The protein localises to the golgi apparatus membrane. Functionally, probable inactive glycosyltransferase. The sequence is that of Putative inactive polypeptide N-acetylgalactosaminyltransferase 11 from Drosophila melanogaster (Fruit fly).